Reading from the N-terminus, the 630-residue chain is SHC-transforming protein 4 (630 aa).

A CH2 region spans residues 1–185 (MRERGQDSLA…RQDRHFLQHL (185 aa)). 2 disordered regions span residues 39 to 80 (TSLD…QESP) and 118 to 150 (KLQESRDPGSSGPSSPETSLSRSGTAPPPQQDL). Residues 125 to 142 (PGSSGPSSPETSLSRSGT) show a composition bias toward low complexity. Residues 186-369 (LGMGMNYCVR…VHIDSHAEER (184 aa)) enclose the PID domain. The segment at 370–525 (EDHEYYNEIP…HIKQQLWSEE (156 aa)) is CH1. Tyrosine 424 is modified (phosphotyrosine). Polar residues-rich tracts occupy residues 471-486 (LQSTPGSAGNQRSAQP) and 502-513 (PGATAQPASSHS). The interval 471–514 (LQSTPGSAGNQRSAQPLGSPWHCGKAPETVQPGATAQPASSHSL) is disordered. The SH2 domain occupies 526–617 (CYHGKLSRKA…GSEVSLKQPV (92 aa)).

In terms of assembly, interacts (via PID domain) with phosphorylated MUSK (via NPXY motif); undergoes tyrosine phosphorylation downstream of activated MUSK. Interacts with GRB2; the interaction is dependent of Tyr-424 phosphorylation and increased by EGF. In terms of processing, phosphorylated; the phosphorylation is enhanced by EGF. Phosphorylation at Tyr-424 is required for the interaction with GRB2. In terms of tissue distribution, only expressed in melanomas. Weakly expressed in normal melanocytes and benign nevi. Highly expressed at the transition from radial growth phase to vertical growth phase and metastatic melanomas, when tumor cells acquire migratory competence and invasive potential.

The protein resides in the postsynaptic cell membrane. In terms of biological role, activates both Ras-dependent and Ras-independent migratory pathways in melanomas. Contributes to the early phases of agrin-induced tyrosine phosphorylation of CHRNB1. In Homo sapiens (Human), this protein is SHC-transforming protein 4 (SHC4).